The following is a 546-amino-acid chain: Probable acyl-activating enzyme 21 (546 aa).

Belongs to the ATP-dependent AMP-binding enzyme family.

In terms of biological role, may act as an acid--thiol ligase that activates carboxylic acids by forming acyl-CoAs. The protein is Probable acyl-activating enzyme 21 (AEE21) of Arabidopsis thaliana (Mouse-ear cress).